A 203-amino-acid polypeptide reads, in one-letter code: Corrinoid adenosyltransferase (203 aa).

Residues 1 to 21 (MNESPEKDQRHRERMERKKAV) are disordered. 41 to 47 (GNGKGKS) contributes to the ATP binding site.

The protein belongs to the Cob(I)alamin adenosyltransferase family. In terms of assembly, monomer. Mn(2+) serves as cofactor.

The protein resides in the cytoplasm. The catalysed reaction is 2 cob(II)yrinate a,c diamide + reduced [electron-transfer flavoprotein] + 2 ATP = 2 adenosylcob(III)yrinate a,c-diamide + 2 triphosphate + oxidized [electron-transfer flavoprotein] + 3 H(+). The enzyme catalyses 2 cob(II)alamin + reduced [electron-transfer flavoprotein] + 2 ATP = 2 adenosylcob(III)alamin + 2 triphosphate + oxidized [electron-transfer flavoprotein] + 3 H(+). Its pathway is cofactor biosynthesis; adenosylcobalamin biosynthesis; adenosylcobalamin from cob(II)yrinate a,c-diamide: step 2/7. Its function is as follows. Required for both de novo synthesis of the corrin ring for the assimilation of exogenous corrinoids. Participates in the adenosylation of a variety of incomplete and complete corrinoids. The chain is Corrinoid adenosyltransferase (cobO) from Pseudomonas aeruginosa (strain ATCC 15692 / DSM 22644 / CIP 104116 / JCM 14847 / LMG 12228 / 1C / PRS 101 / PAO1).